A 979-amino-acid polypeptide reads, in one-letter code: Glycine dehydrogenase (decarboxylating) (979 aa).

Residue lysine 724 is modified to N6-(pyridoxal phosphate)lysine.

The protein belongs to the GcvP family. As to quaternary structure, the glycine cleavage system is composed of four proteins: P, T, L and H. It depends on pyridoxal 5'-phosphate as a cofactor.

The enzyme catalyses N(6)-[(R)-lipoyl]-L-lysyl-[glycine-cleavage complex H protein] + glycine + H(+) = N(6)-[(R)-S(8)-aminomethyldihydrolipoyl]-L-lysyl-[glycine-cleavage complex H protein] + CO2. Its function is as follows. The glycine cleavage system catalyzes the degradation of glycine. The P protein binds the alpha-amino group of glycine through its pyridoxal phosphate cofactor; CO(2) is released and the remaining methylamine moiety is then transferred to the lipoamide cofactor of the H protein. This chain is Glycine dehydrogenase (decarboxylating), found in Nostoc punctiforme (strain ATCC 29133 / PCC 73102).